Consider the following 372-residue polypeptide: Beta-1,4-galactosyltransferase 2 (372 aa).

Residues 1 to 15 (MSRLLGGTLERVCKA) are Cytoplasmic-facing. The helical; Signal-anchor for type II membrane protein transmembrane segment at 16-36 (VLLLCLLHFLVAVILYFDVYA) threads the bilayer. At 37-372 (QHLAFFSRFS…GRPPSWPPRG (336 aa)) the chain is on the lumenal side. The disordered stretch occupies residues 56 to 97 (PAASSSSSSSNCSRPNATASSSGLPEVPSALPGPTAPTLPPC). N-linked (GlcNAc...) asparagine glycosylation is found at N66 and N71. The segment covering 66–78 (NCSRPNATASSSG) has biased composition (polar residues). Residues C97 and C139 are joined by a disulfide bond. UDP-alpha-D-galactose is bound by residues 150–154 (PFRHR), 189–191 (FNR), 217–218 (VD), and W278. A disulfide bridge connects residues C211 and C230. D218 contacts Mn(2+). An N-acetyl-D-glucosamine-binding site is contributed by 280–283 (GEDD). H311 lines the Mn(2+) pocket. 311-313 (HDR) lines the UDP-alpha-D-galactose pocket. An N-acetyl-D-glucosamine-binding site is contributed by R323. N357 carries an N-linked (GlcNAc...) asparagine glycan.

This sequence belongs to the glycosyltransferase 7 family. It depends on Mn(2+) as a cofactor. Weakly expressed in various tissues. Highest expression in prostate, testis, ovary, intestine, muscle, and in fetal brain.

The protein localises to the golgi apparatus. It localises to the golgi stack membrane. It carries out the reaction D-glucose + UDP-alpha-D-galactose = lactose + UDP + H(+). The catalysed reaction is an N-acetyl-beta-D-glucosaminyl derivative + UDP-alpha-D-galactose = a beta-D-galactosyl-(1-&gt;4)-N-acetyl-beta-D-glucosaminyl derivative + UDP + H(+). The enzyme catalyses N-acetyl-D-glucosamine + UDP-alpha-D-galactose = beta-D-galactosyl-(1-&gt;4)-N-acetyl-D-glucosamine + UDP + H(+). It functions in the pathway protein modification; protein glycosylation. Its function is as follows. Responsible for the synthesis of complex-type N-linked oligosaccharides in many glycoproteins as well as the carbohydrate moieties of glycolipids. Can produce lactose. The protein is Beta-1,4-galactosyltransferase 2 of Homo sapiens (Human).